A 473-amino-acid chain; its full sequence is Phosphatidylserine synthase 1 (473 aa).

Ala-2 carries the post-translational modification N-acetylalanine. Over Ala-2–Asp-35 the chain is Cytoplasmic. The chain crosses the membrane as a helical span at residues Phe-36–Phe-56. The Lumenal segment spans residues Ala-57–Gly-72. The helical transmembrane segment at Ile-73–Phe-93 threads the bilayer. Topologically, residues Thr-94–Arg-102 are cytoplasmic. Residues Met-103–Phe-123 form a helical membrane-spanning segment. Residues Glu-124–Tyr-186 lie on the Lumenal side of the membrane. A helical transmembrane segment spans residues Gly-187–Leu-207. The Cytoplasmic portion of the chain corresponds to Pro-208–Asp-216. The chain crosses the membrane as a helical span at residues Gln-217 to Cys-237. Over Arg-238–Arg-286 the chain is Lumenal. A helical membrane pass occupies residues Val-287–Leu-307. The Cytoplasmic segment spans residues Lys-308–Leu-319. A helical membrane pass occupies residues Ser-320–Leu-342. Residues Thr-343–Trp-355 are Lumenal-facing. Residues Val-356–Phe-376 traverse the membrane as a helical segment. The Cytoplasmic segment spans residues Ser-377–Tyr-383. Residues Val-384 to Trp-404 form a helical membrane-spanning segment. Residues Tyr-405–Lys-473 lie on the Lumenal side of the membrane. Ser-417, Ser-425, and Ser-454 each carry phosphoserine. The segment at Asp-427–Lys-473 is disordered. Positions Ser-455–Ser-464 are enriched in basic residues.

The protein belongs to the phosphatidyl serine synthase family.

Its subcellular location is the endoplasmic reticulum membrane. It catalyses the reaction a 1,2-diacyl-sn-glycero-3-phosphoethanolamine + L-serine = a 1,2-diacyl-sn-glycero-3-phospho-L-serine + ethanolamine. It carries out the reaction a 1,2-diacyl-sn-glycero-3-phosphocholine + L-serine = a 1,2-diacyl-sn-glycero-3-phospho-L-serine + choline. Its pathway is phospholipid metabolism; phosphatidylserine biosynthesis. In terms of biological role, catalyzes a base-exchange reaction in which the polar head group of phosphatidylethanolamine (PE) or phosphatidylcholine (PC) is replaced by L-serine. Catalyzes mainly the conversion of phosphatidylcholine but also converts, in vitro and to a lesser extent, phosphatidylethanolamine. This chain is Phosphatidylserine synthase 1 (PTDSS1), found in Bos taurus (Bovine).